The chain runs to 60 residues: Metallothionein B (60 aa).

Positions 1–28 (MDPCDCSKSGTCNCGGSCTCTNCSCTTC) are beta. 20 residues coordinate a divalent metal cation: Cys-4, Cys-6, Cys-12, Cys-14, Cys-18, Cys-20, Cys-23, Cys-25, Cys-28, Cys-32, Cys-33, Cys-35, Cys-36, Cys-40, Cys-43, Cys-47, Cys-49, Cys-54, Cys-58, and Cys-59. Residues 29–60 (KKSCCPCCPSGCTKCASGCVCKGKTCDTSCCQ) form an alpha region.

This sequence belongs to the metallothionein superfamily. Type 1 family.

In terms of biological role, metallothioneins have a high content of cysteine residues that bind various heavy metals. This is Metallothionein B (mtb) from Dicentrarchus labrax (European seabass).